The following is a 233-amino-acid chain: TATA-box-binding protein 1 (233 aa).

Tandem repeats lie at residues 58–134 (LQNI…ARIV) and 148–225 (IQNI…YPVL).

This sequence belongs to the TBP family. As to quaternary structure, belongs to the TFIID complex together with the TBP-associated factors (TAFs). Binds DNA as monomer.

It localises to the nucleus. General transcription factor that functions at the core of the DNA-binding multiprotein factor TFIID. Binding of TFIID to the TATA box is the initial transcriptional step of the pre-initiation complex (PIC), playing a role in the activation of eukaryotic genes transcribed by RNA polymerase II. The polypeptide is TATA-box-binding protein 1 (TBP1) (Triticum aestivum (Wheat)).